We begin with the raw amino-acid sequence, 180 residues long: Large ribosomal subunit protein uL5 (180 aa).

This sequence belongs to the universal ribosomal protein uL5 family. In terms of assembly, part of the 50S ribosomal subunit; part of the 5S rRNA/L5/L18/L25 subcomplex. Contacts the 5S rRNA and the P site tRNA. Forms a bridge to the 30S subunit in the 70S ribosome.

In terms of biological role, this is one of the proteins that bind and probably mediate the attachment of the 5S RNA into the large ribosomal subunit, where it forms part of the central protuberance. In the 70S ribosome it contacts protein S13 of the 30S subunit (bridge B1b), connecting the 2 subunits; this bridge is implicated in subunit movement. Contacts the P site tRNA; the 5S rRNA and some of its associated proteins might help stabilize positioning of ribosome-bound tRNAs. The chain is Large ribosomal subunit protein uL5 from Pediococcus pentosaceus (strain ATCC 25745 / CCUG 21536 / LMG 10740 / 183-1w).